Here is a 255-residue protein sequence, read N- to C-terminus: Leucyl/phenylalanyl-tRNA--protein transferase (255 aa).

The protein belongs to the L/F-transferase family.

It localises to the cytoplasm. It catalyses the reaction N-terminal L-lysyl-[protein] + L-leucyl-tRNA(Leu) = N-terminal L-leucyl-L-lysyl-[protein] + tRNA(Leu) + H(+). It carries out the reaction N-terminal L-arginyl-[protein] + L-leucyl-tRNA(Leu) = N-terminal L-leucyl-L-arginyl-[protein] + tRNA(Leu) + H(+). The enzyme catalyses L-phenylalanyl-tRNA(Phe) + an N-terminal L-alpha-aminoacyl-[protein] = an N-terminal L-phenylalanyl-L-alpha-aminoacyl-[protein] + tRNA(Phe). Functions in the N-end rule pathway of protein degradation where it conjugates Leu, Phe and, less efficiently, Met from aminoacyl-tRNAs to the N-termini of proteins containing an N-terminal arginine or lysine. The polypeptide is Leucyl/phenylalanyl-tRNA--protein transferase (Burkholderia pseudomallei (strain 1106a)).